We begin with the raw amino-acid sequence, 394 residues long: 1-deoxy-D-xylulose 5-phosphate reductoisomerase (394 aa).

NADPH contacts are provided by Thr-14, Gly-15, Ser-16, Ile-17, Gly-40, Asn-43, and Asn-130. Lys-131 serves as a coordination point for 1-deoxy-D-xylulose 5-phosphate. Glu-132 provides a ligand contact to NADPH. Asp-154 provides a ligand contact to Mn(2+). 4 residues coordinate 1-deoxy-D-xylulose 5-phosphate: Ser-155, Glu-156, Ser-180, and His-203. Mn(2+) is bound at residue Glu-156. Gly-209 serves as a coordination point for NADPH. 4 residues coordinate 1-deoxy-D-xylulose 5-phosphate: Ser-216, Asn-221, Lys-222, and Glu-225. Glu-225 is a binding site for Mn(2+).

This sequence belongs to the DXR family. The cofactor is Mg(2+). Requires Mn(2+) as cofactor.

It carries out the reaction 2-C-methyl-D-erythritol 4-phosphate + NADP(+) = 1-deoxy-D-xylulose 5-phosphate + NADPH + H(+). It functions in the pathway isoprenoid biosynthesis; isopentenyl diphosphate biosynthesis via DXP pathway; isopentenyl diphosphate from 1-deoxy-D-xylulose 5-phosphate: step 1/6. In terms of biological role, catalyzes the NADPH-dependent rearrangement and reduction of 1-deoxy-D-xylulose-5-phosphate (DXP) to 2-C-methyl-D-erythritol 4-phosphate (MEP). The sequence is that of 1-deoxy-D-xylulose 5-phosphate reductoisomerase from Corynebacterium efficiens (strain DSM 44549 / YS-314 / AJ 12310 / JCM 11189 / NBRC 100395).